The following is a 265-amino-acid chain: Hydroxyethylthiazole kinase (265 aa).

Met-43 is a binding site for substrate. Arg-119 and Ser-165 together coordinate ATP. Residue Ala-192 participates in substrate binding.

This sequence belongs to the Thz kinase family. It depends on Mg(2+) as a cofactor.

The enzyme catalyses 5-(2-hydroxyethyl)-4-methylthiazole + ATP = 4-methyl-5-(2-phosphooxyethyl)-thiazole + ADP + H(+). Its pathway is cofactor biosynthesis; thiamine diphosphate biosynthesis; 4-methyl-5-(2-phosphoethyl)-thiazole from 5-(2-hydroxyethyl)-4-methylthiazole: step 1/1. Functionally, catalyzes the phosphorylation of the hydroxyl group of 4-methyl-5-beta-hydroxyethylthiazole (THZ). The protein is Hydroxyethylthiazole kinase of Haemophilus influenzae (strain ATCC 51907 / DSM 11121 / KW20 / Rd).